A 334-amino-acid polypeptide reads, in one-letter code: Methionine import ATP-binding protein MetN (334 aa).

The region spanning 7–246 (VEFRSVSKVF…PRSAPARAFV (240 aa)) is the ABC transporter domain. 43–50 (GYSGAGKS) contacts ATP.

Belongs to the ABC transporter superfamily. Methionine importer (TC 3.A.1.24) family. In terms of assembly, the complex is composed of two ATP-binding proteins (MetN), two transmembrane proteins (MetI) and a solute-binding protein (MetQ).

It is found in the cell membrane. It carries out the reaction L-methionine(out) + ATP + H2O = L-methionine(in) + ADP + phosphate + H(+). The catalysed reaction is D-methionine(out) + ATP + H2O = D-methionine(in) + ADP + phosphate + H(+). Its function is as follows. Part of the ABC transporter complex MetNIQ involved in methionine import. Responsible for energy coupling to the transport system. The sequence is that of Methionine import ATP-binding protein MetN from Nocardia farcinica (strain IFM 10152).